A 431-amino-acid polypeptide reads, in one-letter code: 23S rRNA (uracil(1939)-C(5))-methyltransferase RlmD (431 aa).

The 59-residue stretch at 10–68 folds into the TRAM domain; sequence RVTTRQIITVKVNDLDSFGQGVARHNGKALFIPGLLPEESAEVIITEDKKQFARARVSR. Residues Cys-81, Cys-87, Cys-90, and Cys-161 each coordinate [4Fe-4S] cluster. S-adenosyl-L-methionine is bound by residues Gln-264, Phe-293, Asn-298, Glu-314, Asn-341, and Asp-362. Residue Cys-388 is the Nucleophile of the active site.

The protein belongs to the class I-like SAM-binding methyltransferase superfamily. RNA M5U methyltransferase family. RlmD subfamily.

The catalysed reaction is uridine(1939) in 23S rRNA + S-adenosyl-L-methionine = 5-methyluridine(1939) in 23S rRNA + S-adenosyl-L-homocysteine + H(+). In terms of biological role, catalyzes the formation of 5-methyl-uridine at position 1939 (m5U1939) in 23S rRNA. The protein is 23S rRNA (uracil(1939)-C(5))-methyltransferase RlmD of Salmonella choleraesuis (strain SC-B67).